We begin with the raw amino-acid sequence, 861 residues long: DNA mismatch repair protein MutS (861 aa).

609-616 (GPNMAGKS) lines the ATP pocket.

This sequence belongs to the DNA mismatch repair MutS family.

In terms of biological role, this protein is involved in the repair of mismatches in DNA. It is possible that it carries out the mismatch recognition step. This protein has a weak ATPase activity. This chain is DNA mismatch repair protein MutS, found in Borrelia hermsii (strain HS1 / DAH).